Here is a 133-residue protein sequence, read N- to C-terminus: Small ribosomal subunit protein uS8 (133 aa).

Belongs to the universal ribosomal protein uS8 family. In terms of assembly, part of the 30S ribosomal subunit. Contacts proteins S5 and S12.

Its function is as follows. One of the primary rRNA binding proteins, it binds directly to 16S rRNA central domain where it helps coordinate assembly of the platform of the 30S subunit. The chain is Small ribosomal subunit protein uS8 from Koribacter versatilis (strain Ellin345).